The primary structure comprises 258 residues: uncharacterized protein (258 aa).

The region spanning 3 to 58 (VAERQQKIVEIVNMRSSIRVSELSDIFSVTEETIRRDLEKLEKEHKLSRSHGGAVS) is the HTH deoR-type domain. Positions 20 to 39 (IRVSELSDIFSVTEETIRRD) form a DNA-binding region, H-T-H motif.

This is an uncharacterized protein from Bacillus subtilis (strain 168).